Here is a 354-residue protein sequence, read N- to C-terminus: Small ribosomal subunit biogenesis GTPase RsgA 1 (354 aa).

The segment covering 1–24 (MAKKKKLTKGQVRRVRSNQQKRLK) has biased composition (basic residues). A disordered region spans residues 1 to 28 (MAKKKKLTKGQVRRVRSNQQKRLKKQEE). Positions 113-274 (YDGLKPVAAN…LIDSPGVREF (162 aa)) constitute a CP-type G domain. Residues 160–163 (NKVD) and 214–222 (GQSGVGKSS) each bind GTP. Zn(2+)-binding residues include Cys298, Cys303, His305, and Cys311.

Belongs to the TRAFAC class YlqF/YawG GTPase family. RsgA subfamily. In terms of assembly, monomer. Associates with 30S ribosomal subunit, binds 16S rRNA. Zn(2+) is required as a cofactor.

The protein localises to the cytoplasm. In terms of biological role, one of several proteins that assist in the late maturation steps of the functional core of the 30S ribosomal subunit. Helps release RbfA from mature subunits. May play a role in the assembly of ribosomal proteins into the subunit. Circularly permuted GTPase that catalyzes slow GTP hydrolysis, GTPase activity is stimulated by the 30S ribosomal subunit. In Vibrio parahaemolyticus serotype O3:K6 (strain RIMD 2210633), this protein is Small ribosomal subunit biogenesis GTPase RsgA 1.